A 44-amino-acid polypeptide reads, in one-letter code: Thioredoxin (44 aa).

The Thioredoxin domain occupies 2-44 (IELDKSNFEEEVLKAEGTVLVDFWSPSCEPCKALMPHVHDFEE). A disulfide bridge connects residues cysteine 29 and cysteine 32.

Belongs to the thioredoxin family.

Its function is as follows. Participates in various redox reactions through the reversible oxidation of its active center dithiol to a disulfide and catalyzes dithiol-disulfide exchange reactions. This Tissierella creatinophila protein is Thioredoxin (trxA).